Consider the following 218-residue polypeptide: Glycerol-3-phosphate acyltransferase (218 aa).

6 consecutive transmembrane segments (helical) span residues Phe3–Ala23, Gly53–Ile73, Phe82–Phe102, Leu112–Val132, Ile142–Leu162, and Glu166–His186.

This sequence belongs to the PlsY family. As to quaternary structure, probably interacts with PlsX.

It localises to the cell inner membrane. The enzyme catalyses an acyl phosphate + sn-glycerol 3-phosphate = a 1-acyl-sn-glycero-3-phosphate + phosphate. Its pathway is lipid metabolism; phospholipid metabolism. In terms of biological role, catalyzes the transfer of an acyl group from acyl-phosphate (acyl-PO(4)) to glycerol-3-phosphate (G3P) to form lysophosphatidic acid (LPA). This enzyme utilizes acyl-phosphate as fatty acyl donor, but not acyl-CoA or acyl-ACP. The chain is Glycerol-3-phosphate acyltransferase from Leptospira borgpetersenii serovar Hardjo-bovis (strain JB197).